A 199-amino-acid polypeptide reads, in one-letter code: Thymidine kinase (199 aa).

ATP contacts are provided by residues Gly-15–Ser-22 and Asp-88–Gln-91. The active-site Proton acceptor is the Glu-89. Zn(2+)-binding residues include Cys-145, Cys-148, Cys-183, and His-186.

This sequence belongs to the thymidine kinase family. Homotetramer.

It is found in the cytoplasm. It carries out the reaction thymidine + ATP = dTMP + ADP + H(+). The sequence is that of Thymidine kinase from Staphylococcus epidermidis (strain ATCC 12228 / FDA PCI 1200).